A 306-amino-acid chain; its full sequence is Non-specific ribonucleoside hydrolase RihC (306 aa).

Histidine 235 is a catalytic residue.

It belongs to the IUNH family. RihC subfamily.

Functionally, hydrolyzes both purine and pyrimidine ribonucleosides with a broad-substrate specificity. The chain is Non-specific ribonucleoside hydrolase RihC from Salmonella heidelberg (strain SL476).